Reading from the N-terminus, the 54-residue chain is MSSGSNSGGLMSSAGLVRYFDSEDRDAIAIDPKTVLAFCVLFGVFVQILSLTVA.

Topologically, residues 1 to 31 (MSSGSNSGGLMSSAGLVRYFDSEDRDAIAID) are cytoplasmic. Residues 32 to 53 (PKTVLAFCVLFGVFVQILSLTV) traverse the membrane as a helical segment. A topological domain (extracellular) is located at residue alanine 54.

It belongs to the SEC61-beta family. Component of the protein translocase complex. Heterotrimer consisting of alpha (SecY), beta (SecG) and gamma (SecE) subunits. Can form oligomers of the heterotrimer.

The protein resides in the cell membrane. Involved in protein export. The function of the beta subunit is unknown, but it may be involved in stabilization of the trimeric complex. The chain is Preprotein translocase subunit SecG from Halorubrum lacusprofundi (strain ATCC 49239 / DSM 5036 / JCM 8891 / ACAM 34).